The chain runs to 498 residues: Pyridine nucleotide-disulfide oxidoreductase domain-containing protein 1 (498 aa).

The residue at position 1 (Met-1) is an N-acetylmethionine.

It belongs to the class-I pyridine nucleotide-disulfide oxidoreductase family. PYROXD1 subfamily. The cofactor is FAD.

The protein resides in the nucleus. The protein localises to the cytoplasm. Its subcellular location is the myofibril. It localises to the sarcomere. In terms of biological role, probable FAD-dependent oxidoreductase; involved in the cellular oxidative stress response. Required for normal sarcomere structure and muscle fiber integrity. The polypeptide is Pyridine nucleotide-disulfide oxidoreductase domain-containing protein 1 (Pyroxd1) (Mus musculus (Mouse)).